We begin with the raw amino-acid sequence, 241 residues long: Orotidine 5'-phosphate decarboxylase (241 aa).

Residues Asp-18, Lys-39, 66–75 (DLKFHDIPAT), Thr-130, Arg-192, Gln-201, Gly-221, and Arg-222 each bind substrate. Lys-68 functions as the Proton donor in the catalytic mechanism.

This sequence belongs to the OMP decarboxylase family. Type 1 subfamily. Homodimer.

It carries out the reaction orotidine 5'-phosphate + H(+) = UMP + CO2. It participates in pyrimidine metabolism; UMP biosynthesis via de novo pathway; UMP from orotate: step 2/2. Functionally, catalyzes the decarboxylation of orotidine 5'-monophosphate (OMP) to uridine 5'-monophosphate (UMP). This Synechococcus sp. (strain CC9605) protein is Orotidine 5'-phosphate decarboxylase.